Consider the following 344-residue polypeptide: Dihydroorotase (344 aa).

Positions 13 and 15 each coordinate Zn(2+). Substrate is bound by residues 15-17 and N41; that span reads HLR. 3 residues coordinate Zn(2+): K99, H136, and H174. K99 is subject to N6-carboxylysine. Residue H136 coordinates substrate. L219 serves as a coordination point for substrate. D247 contributes to the Zn(2+) binding site. D247 is a catalytic residue. Residues H251 and A263 each contribute to the substrate site.

Belongs to the metallo-dependent hydrolases superfamily. DHOase family. Class II DHOase subfamily. In terms of assembly, homodimer. The cofactor is Zn(2+).

The enzyme catalyses (S)-dihydroorotate + H2O = N-carbamoyl-L-aspartate + H(+). It functions in the pathway pyrimidine metabolism; UMP biosynthesis via de novo pathway; (S)-dihydroorotate from bicarbonate: step 3/3. Its function is as follows. Catalyzes the reversible cyclization of carbamoyl aspartate to dihydroorotate. The sequence is that of Dihydroorotase from Acinetobacter baumannii (strain AB307-0294).